A 430-amino-acid chain; its full sequence is Histidine--tRNA ligase (430 aa).

It belongs to the class-II aminoacyl-tRNA synthetase family. As to quaternary structure, homodimer.

The protein localises to the cytoplasm. It carries out the reaction tRNA(His) + L-histidine + ATP = L-histidyl-tRNA(His) + AMP + diphosphate + H(+). The polypeptide is Histidine--tRNA ligase (Lactococcus lactis subsp. lactis (strain IL1403) (Streptococcus lactis)).